A 404-amino-acid polypeptide reads, in one-letter code: Cysteine desulfurase IscS (404 aa).

Pyridoxal 5'-phosphate-binding positions include A75–T76, N155, Q183, and S203–H205. N6-(pyridoxal phosphate)lysine is present on K206. T243 lines the pyridoxal 5'-phosphate pocket. The active-site Cysteine persulfide intermediate is C328. Residue C328 coordinates [2Fe-2S] cluster.

This sequence belongs to the class-V pyridoxal-phosphate-dependent aminotransferase family. NifS/IscS subfamily. As to quaternary structure, homodimer. Forms a heterotetramer with IscU, interacts with other sulfur acceptors. It depends on pyridoxal 5'-phosphate as a cofactor.

It localises to the cytoplasm. It catalyses the reaction (sulfur carrier)-H + L-cysteine = (sulfur carrier)-SH + L-alanine. It functions in the pathway cofactor biosynthesis; iron-sulfur cluster biosynthesis. Its function is as follows. Master enzyme that delivers sulfur to a number of partners involved in Fe-S cluster assembly, tRNA modification or cofactor biosynthesis. Catalyzes the removal of elemental sulfur and selenium atoms from cysteine and selenocysteine to produce alanine. Functions as a sulfur delivery protein for Fe-S cluster synthesis onto IscU, an Fe-S scaffold assembly protein, as well as other S acceptor proteins. Also functions as a selenium delivery protein in the pathway for the biosynthesis of selenophosphate. The sequence is that of Cysteine desulfurase IscS from Salmonella gallinarum (strain 287/91 / NCTC 13346).